A 508-amino-acid chain; its full sequence is Matrix metalloproteinase-19 (508 aa).

Positions 1–18 (MNCQQLWLGFLLPMTVSG) are cleaved as a signal peptide. Residues 19–97 (RVLGLAEVAP…EDPFNQKTLK (79 aa)) constitute a propeptide that is removed on maturation. The Cysteine switch signature appears at 83 to 90 (PRCGLEDP). Cys85 and His212 together coordinate Zn(2+). Glu213 is an active-site residue. Positions 216 and 222 each coordinate Zn(2+). The segment at 262 to 288 (IRDEEEEETELPTVPPVPTEPSPMPDP) is disordered. Residues 274 to 287 (TVPPVPTEPSPMPD) show a composition bias toward pro residues. Hemopexin repeat units lie at residues 286–333 (PDPC…WEGL), 334–380 (PGNL…EPNL), 381–425 (DAAL…FTGV), and 426–472 (PNQP…WMHC). Cys289 and Cys472 are joined by a disulfide. The N-linked (GlcNAc...) asparagine glycan is linked to Asn464.

Belongs to the peptidase M10A family. Requires Zn(2+) as cofactor. Ca(2+) is required as a cofactor. In terms of processing, activated by autolytic cleavage after Lys-97. Tyrosine phosphorylated by PKDCC/VLK. In terms of tissue distribution, expressed in mammary gland, placenta, lung, pancreas, ovary, small intestine, spleen, thymus, prostate, testis colon, heart and blood vessel walls. Not detected in brain and peripheral blood leukocytes. Also expressed in the synovial fluid of normal and rheumatoid patients.

It localises to the secreted. The protein localises to the extracellular space. Its subcellular location is the extracellular matrix. Its activity is regulated as follows. Strongly inhibited by TIMP-2, TIMP-3 and TIMP-4, while TIMP-1 is less efficient. Endopeptidase that degrades various components of the extracellular matrix, such as aggrecan and cartilage oligomeric matrix protein (comp), during development, haemostasis and pathological conditions (arthritic disease). May also play a role in neovascularization or angiogenesis. Hydrolyzes collagen type IV, laminin, nidogen, nascin-C isoform, fibronectin, and type I gelatin. The polypeptide is Matrix metalloproteinase-19 (MMP19) (Homo sapiens (Human)).